The chain runs to 427 residues: Glutamate-1-semialdehyde 2,1-aminomutase (427 aa).

Lys-267 is modified (N6-(pyridoxal phosphate)lysine).

The protein belongs to the class-III pyridoxal-phosphate-dependent aminotransferase family. HemL subfamily. Homodimer. The cofactor is pyridoxal 5'-phosphate.

The protein localises to the cytoplasm. The enzyme catalyses (S)-4-amino-5-oxopentanoate = 5-aminolevulinate. It functions in the pathway porphyrin-containing compound metabolism; protoporphyrin-IX biosynthesis; 5-aminolevulinate from L-glutamyl-tRNA(Glu): step 2/2. The polypeptide is Glutamate-1-semialdehyde 2,1-aminomutase (Thermodesulfovibrio yellowstonii (strain ATCC 51303 / DSM 11347 / YP87)).